An 81-amino-acid polypeptide reads, in one-letter code: Photosystem I iron-sulfur center (81 aa).

4Fe-4S ferredoxin-type domains follow at residues 2-31 (SHSV…MIPW) and 39-68 (IASA…VRVY). [4Fe-4S] cluster is bound by residues Cys-11, Cys-14, Cys-17, Cys-21, Cys-48, Cys-51, Cys-54, and Cys-58.

In terms of assembly, the eukaryotic PSI reaction center is composed of at least 11 subunits. It depends on [4Fe-4S] cluster as a cofactor.

The protein resides in the plastid thylakoid membrane. The catalysed reaction is reduced [plastocyanin] + hnu + oxidized [2Fe-2S]-[ferredoxin] = oxidized [plastocyanin] + reduced [2Fe-2S]-[ferredoxin]. Its function is as follows. Apoprotein for the two 4Fe-4S centers FA and FB of photosystem I (PSI); essential for photochemical activity. FB is the terminal electron acceptor of PSI, donating electrons to ferredoxin. The C-terminus interacts with PsaA/B/D and helps assemble the protein into the PSI complex. Required for binding of PsaD and PsaE to PSI. PSI is a plastocyanin-ferredoxin oxidoreductase, converting photonic excitation into a charge separation, which transfers an electron from the donor P700 chlorophyll pair to the spectroscopically characterized acceptors A0, A1, FX, FA and FB in turn. The protein is Photosystem I iron-sulfur center of Cuscuta reflexa (Southern Asian dodder).